The primary structure comprises 407 residues: MAPIAGKKAKRGILERLNAGEVVIGDGGFVFALEKRGYVKAGPWTPEAAVEHPEAVRQLHREFLRAGSNVMQTFTFYASEDKLENRGNYVAEKISGQKVNEAACDIARQVADEGDALVAGGVSQTPSYLSCKSETEVKKIFHQQLEVFMKKNVDFLIAEYFEHVEEAVWAVEALKTSGKPIAATMCIGPEGDLHGVSPGECAVRLVKAGAAIVGVNCHFDPSTSLQTIKLMKEGLEAARLKAYLMSHALAYHTPDCGKQGFIDLPEFPFGLEPRVATRWDIQKYAREAYNLGVRYIGGCCGFEPYHIRAIAEELAPERGFLPPASEKHGSWGSGLDMHTKPWIRARARKEYWQNLRIASGRPYNPSMSKPDAWGVTKGAAELMQQKEATTEQQLRALFEKQKFKSAQ.

The region spanning Arg-11 to Leu-314 is the Hcy-binding domain. N6-succinyllysine is present on residues Lys-40, Lys-93, and Lys-98. A Zn(2+)-binding site is contributed by Cys-217. Residues Lys-232 and Lys-241 each carry the N6-succinyllysine modification. Residues Cys-299 and Cys-300 each coordinate Zn(2+). Ser-330 carries the post-translational modification Phosphoserine. Residues Lys-340 and Lys-377 each carry the N6-succinyllysine modification.

In terms of assembly, homotetramer. Zn(2+) serves as cofactor. Highly expressed in liver and kidney (at protein level). Expressed at lower levels in testis, lung, cerebellum, skeletal muscle and pancreas (at protein level).

Its subcellular location is the cytoplasm. The protein resides in the cytosol. It localises to the nucleus. The catalysed reaction is L-homocysteine + glycine betaine = N,N-dimethylglycine + L-methionine. It participates in amine and polyamine degradation; betaine degradation; sarcosine from betaine: step 1/2. It functions in the pathway amino-acid biosynthesis; L-methionine biosynthesis via de novo pathway; L-methionine from L-homocysteine (BhmT route): step 1/1. Involved in the regulation of homocysteine metabolism. Converts betaine and homocysteine to dimethylglycine and methionine, respectively. This reaction is also required for the irreversible oxidation of choline. The protein is Betaine--homocysteine S-methyltransferase 1 of Rattus norvegicus (Rat).